Here is a 262-residue protein sequence, read N- to C-terminus: Cutinase 2 (262 aa).

Tyr-61 is a poly(ethylene terephthalate) binding site. Residue Ser-131 is the Nucleophile of the active site. Poly(ethylene terephthalate) is bound by residues Met-132 and Trp-156. Catalysis depends on charge relay system residues Asp-177 and His-209. Cys-242 and Cys-260 are joined by a disulfide.

Belongs to the AB hydrolase superfamily.

The protein localises to the secreted. It is found in the periplasm. It carries out the reaction a butanoate ester + H2O = an aliphatic alcohol + butanoate + H(+). The enzyme catalyses an acetyl ester + H2O = an aliphatic alcohol + acetate + H(+). The catalysed reaction is (ethylene terephthalate)(n) + H2O = (ethylene terephthalate)(n-1) + 4-[(2-hydroxyethoxy)carbonyl]benzoate + H(+). It catalyses the reaction cutin + H2O = cutin monomers.. In terms of biological role, catalyzes the hydrolysis of cutin, a polyester that forms the structure of plant cuticle. Shows esterase activity towards p-nitrophenol-linked aliphatic esters (pNP-aliphatic esters). Capable of degrading the plastic poly(ethylene terephthalate) (PET), the most abundant polyester plastic in the world. Capable of degrading the bioplastic poly(lactic acid) (PLLA). In Thermobifida cellulosilytica, this protein is Cutinase 2.